Reading from the N-terminus, the 738-residue chain is LPS-assembly protein LptD (738 aa).

The first 26 residues, 1–26 (MEHKRNNILLAGLFFLLLGLVSIARA), serve as a signal peptide directing secretion.

Belongs to the LptD family. As to quaternary structure, component of the lipopolysaccharide transport and assembly complex. Interacts with LptE and LptA.

The protein resides in the cell outer membrane. Functionally, together with LptE, is involved in the assembly of lipopolysaccharide (LPS) at the surface of the outer membrane. This chain is LPS-assembly protein LptD, found in Nitrosococcus oceani (strain ATCC 19707 / BCRC 17464 / JCM 30415 / NCIMB 11848 / C-107).